The sequence spans 259 residues: 3-hydroxypropionyl-coenzyme A dehydratase (259 aa).

The active-site Nucleophile is Glu113. Glu133 functions as the Proton acceptor in the catalytic mechanism.

It belongs to the enoyl-CoA hydratase/isomerase family. As to quaternary structure, monomer.

It catalyses the reaction 3-hydroxypropanoyl-CoA = acryloyl-CoA + H2O. Its function is as follows. Plays a role in autotrophic carbon fixation via the 3-hydroxypropionate/4-hydroxybutyrate cycle. Catalyzes the reversible dehydration of 3-hydroxypropionyl-CoA to form acryloyl-CoA, and the reversible dehydration of (S)-3-hydroxybutyryl-CoA to form crotonyl-CoA. Inactive towards (R)-3-hydroxybutyryl-CoA. The chain is 3-hydroxypropionyl-coenzyme A dehydratase from Metallosphaera sedula (strain ATCC 51363 / DSM 5348 / JCM 9185 / NBRC 15509 / TH2).